The following is a 1036-amino-acid chain: Protein smoothened (1036 aa).

The first 31 residues, 1 to 31 (MQYLNFPRMPNIMMFLEVAILCLWVVADASA), serve as a signal peptide directing secretion. Residues 32–258 (SSAKFGSTTP…DDEHRQIHKL (227 aa)) are Extracellular-facing. N-linked (GlcNAc...) asparagine glycans are attached at residues Asn-55 and Asn-95. The FZ domain maps to 85–206 (VRRARCYPTS…TLFPTKCTNG (122 aa)). 4 disulfides stabilise this stretch: Cys-90–Cys-155, Cys-100–Cys-148, Cys-139–Cys-179, and Cys-172–Cys-194. Asn-184, Asn-195, and Asn-213 each carry an N-linked (GlcNAc...) asparagine glycan. Cystine bridges form between Cys-218–Cys-238 and Cys-242–Cys-320. Residues 259-279 (IGWAGSICLLSNLFVVSTFFI) form a helical membrane-spanning segment. Topologically, residues 280 to 287 (DWKNANKY) are cytoplasmic. The chain crosses the membrane as a helical span at residues 288 to 308 (PAVIVFYINLCFLIACVGWLL). Topologically, residues 309–339 (QFTSGSREDIVCRKDGTLRHSEPTAGENLSC) are extracellular. Asn-336 is a glycosylation site (N-linked (GlcNAc...) asparagine). A disulfide bond links Cys-339 and Cys-413. The helical transmembrane segment at 340–360 (IVIFVLVYYFLTAGMVWFVFL) threads the bilayer. Topologically, residues 361 to 381 (TYAWHWRAMGHVQDRIDKKGS) are cytoplasmic. A helical membrane pass occupies residues 382–402 (YFHLVAWSLPLVLTITTMAFS). Residues 403–421 (EVDGNSIVGICFVGYINHS) are Extracellular-facing. Residue Asn-419 is glycosylated (N-linked (GlcNAc...) asparagine). A helical transmembrane segment spans residues 422–442 (MRAGLLLGPLCGVILIGGYFI). Topologically, residues 443–469 (TRGMVMLFGLKHFANDIKSTSASNKIH) are cytoplasmic. A helical transmembrane segment spans residues 470–490 (LIIMRMGVCALLTLVFILVAI). At 491–532 (ACHVTEFRHADEWAQSFRQFIICKISSVFEEKSSCRIENRPS) the chain is on the extracellular side. Cys-513 and Cys-525 are disulfide-bonded. Residues 533–553 (VGVLQLHLLCLFSSGIVMSTW) traverse the membrane as a helical segment. The Cytoplasmic segment spans residues 554–1036 (CWTPSSIETW…KLKMLLLPSK (483 aa)). 8 positions are modified to phosphoserine: Ser-658, Ser-659, Ser-667, Ser-670, Ser-673, Ser-687, Ser-690, and Ser-693. Disordered regions lie at residues 678-745 (HVSV…TSVE) and 870-902 (IKKS…KNPA). A compositionally biased stretch (basic residues) spans 880–899 (RHSRNSARSQSKKSQKRHLK).

This sequence belongs to the G-protein coupled receptor Fz/Smo family. Interacts with cos. Post-translationally, phosphorylation by CkIalpha and PKA regulates smo accumulation at the cell surface and its signaling activity in response to hh. As to expression, expressed in olfactory sensory neurons (at protein level).

Its subcellular location is the cell membrane. The protein localises to the cell projection. It localises to the cilium. Its function is as follows. Segment polarity protein required for correct patterning of every segment. G protein-coupled receptor which associates with the patched protein (ptc) to transduce the hedgehog (hh) signal through the activation of an inhibitory G-protein. In the absence of hh, ptc represses the constitutive signaling activity of smo through fused (fu). Essential component of a hh-signaling pathway which regulates the Duox-dependent gut immune response to bacterial uracil; required to activate Cad99C-dependent endosome formation, norpA-dependent Ca2+ mobilization and p38 MAPK, which are essential steps in the Duox-dependent production of reactive oxygen species (ROS) in response to intestinal bacterial infection. The chain is Protein smoothened (smo) from Drosophila melanogaster (Fruit fly).